Reading from the N-terminus, the 285-residue chain is NAD kinase (285 aa).

Residue Asp-68 is the Proton acceptor of the active site. NAD(+) contacts are provided by residues 68–69, 142–143, Arg-153, Arg-170, Asp-172, and Gln-242; these read DG and ND.

This sequence belongs to the NAD kinase family. It depends on a divalent metal cation as a cofactor.

Its subcellular location is the cytoplasm. The catalysed reaction is NAD(+) + ATP = ADP + NADP(+) + H(+). Functionally, involved in the regulation of the intracellular balance of NAD and NADP, and is a key enzyme in the biosynthesis of NADP. Catalyzes specifically the phosphorylation on 2'-hydroxyl of the adenosine moiety of NAD to yield NADP. The chain is NAD kinase from Acidobacterium capsulatum (strain ATCC 51196 / DSM 11244 / BCRC 80197 / JCM 7670 / NBRC 15755 / NCIMB 13165 / 161).